The sequence spans 110 residues: MTVATLKIKKGDTVQIITGKDRGLKGKVIRAYPEQNKVLVEGANRITRHTRVQQSARGSQSGGIVTQEAPIHVSNVMIVDPSDGRPTRIGYRINEDGTKVRISRRTGAEL.

The protein belongs to the universal ribosomal protein uL24 family. As to quaternary structure, part of the 50S ribosomal subunit.

In terms of biological role, one of two assembly initiator proteins, it binds directly to the 5'-end of the 23S rRNA, where it nucleates assembly of the 50S subunit. One of the proteins that surrounds the polypeptide exit tunnel on the outside of the subunit. This Frankia alni (strain DSM 45986 / CECT 9034 / ACN14a) protein is Large ribosomal subunit protein uL24.